The following is a 220-amino-acid chain: Small ribosomal subunit protein uS3c (220 aa).

One can recognise a KH type-2 domain in the interval 43–120 (IQHYVEKNTR…RLNIAIIRVA (78 aa)).

This sequence belongs to the universal ribosomal protein uS3 family. In terms of assembly, part of the 30S ribosomal subunit.

It localises to the plastid. The protein resides in the chloroplast. This is Small ribosomal subunit protein uS3c (rps3) from Piper cenocladum (Ant piper).